Consider the following 402-residue polypeptide: 4-hydroxy-3-methylbut-2-enyl diphosphate reductase (402 aa).

C66 lines the [4Fe-4S] cluster pocket. Residue H96 participates in (2E)-4-hydroxy-3-methylbut-2-enyl diphosphate binding. A dimethylallyl diphosphate-binding site is contributed by H96. H96 serves as a coordination point for isopentenyl diphosphate. C157 serves as a coordination point for [4Fe-4S] cluster. H185 contributes to the (2E)-4-hydroxy-3-methylbut-2-enyl diphosphate binding site. H185 lines the dimethylallyl diphosphate pocket. H185 is an isopentenyl diphosphate binding site. E187 functions as the Proton donor in the catalytic mechanism. A (2E)-4-hydroxy-3-methylbut-2-enyl diphosphate-binding site is contributed by T250. Residue C288 coordinates [4Fe-4S] cluster. 4 residues coordinate (2E)-4-hydroxy-3-methylbut-2-enyl diphosphate: S317, S318, N319, and S379. Residues S317, S318, N319, and S379 each coordinate dimethylallyl diphosphate. Residues S317, S318, N319, and S379 each coordinate isopentenyl diphosphate.

It belongs to the IspH family. [4Fe-4S] cluster serves as cofactor.

The enzyme catalyses isopentenyl diphosphate + 2 oxidized [2Fe-2S]-[ferredoxin] + H2O = (2E)-4-hydroxy-3-methylbut-2-enyl diphosphate + 2 reduced [2Fe-2S]-[ferredoxin] + 2 H(+). It catalyses the reaction dimethylallyl diphosphate + 2 oxidized [2Fe-2S]-[ferredoxin] + H2O = (2E)-4-hydroxy-3-methylbut-2-enyl diphosphate + 2 reduced [2Fe-2S]-[ferredoxin] + 2 H(+). It functions in the pathway isoprenoid biosynthesis; dimethylallyl diphosphate biosynthesis; dimethylallyl diphosphate from (2E)-4-hydroxy-3-methylbutenyl diphosphate: step 1/1. The protein operates within isoprenoid biosynthesis; isopentenyl diphosphate biosynthesis via DXP pathway; isopentenyl diphosphate from 1-deoxy-D-xylulose 5-phosphate: step 6/6. Functionally, catalyzes the conversion of 1-hydroxy-2-methyl-2-(E)-butenyl 4-diphosphate (HMBPP) into a mixture of isopentenyl diphosphate (IPP) and dimethylallyl diphosphate (DMAPP). Acts in the terminal step of the DOXP/MEP pathway for isoprenoid precursor biosynthesis. This is 4-hydroxy-3-methylbut-2-enyl diphosphate reductase from Nostoc punctiforme (strain ATCC 29133 / PCC 73102).